The primary structure comprises 366 residues: DNA integrity scanning protein DisA (366 aa).

Positions 21–159 constitute a DAC domain; that stretch reads VHTLKGTLQR…EGKSHMLEQP (139 aa). Residues glycine 88, leucine 106, and 119 to 123 contribute to the ATP site; that span reads TRHRS.

The protein belongs to the DisA family. In terms of assembly, homooctamer. It depends on Mg(2+) as a cofactor.

The enzyme catalyses 2 ATP = 3',3'-c-di-AMP + 2 diphosphate. Functionally, participates in a DNA-damage check-point. DisA forms globular foci that rapidly scan along the chromosomes searching for lesions. Its function is as follows. Also has diadenylate cyclase activity, catalyzing the condensation of 2 ATP molecules into cyclic di-AMP (c-di-AMP). c-di-AMP likely acts as a signaling molecule that may couple DNA integrity with a cellular process. This Corynebacterium glutamicum (strain ATCC 13032 / DSM 20300 / JCM 1318 / BCRC 11384 / CCUG 27702 / LMG 3730 / NBRC 12168 / NCIMB 10025 / NRRL B-2784 / 534) protein is DNA integrity scanning protein DisA.